The sequence spans 150 residues: UPF0208 membrane protein VIBHAR_02941 (150 aa).

A run of 2 helical transmembrane segments spans residues 42–62 (FGIK…MAFN) and 70–90 (AIVV…WLGS).

It belongs to the UPF0208 family.

It localises to the cell inner membrane. In Vibrio campbellii (strain ATCC BAA-1116), this protein is UPF0208 membrane protein VIBHAR_02941.